Here is a 982-residue protein sequence, read N- to C-terminus: E3 ubiquitin-protein ligase CBL-B (982 aa).

Positions 1–14 (MASSSSSSSSTNSS) are enriched in low complexity. The segment at 1-25 (MASSSSSSSSTNSSAVTGRLPGARS) is disordered. The tract at residues 46–178 (PPKQAAADRR…KAIFPSGQFQ (133 aa)) is 4H. The Cbl-PTB domain occupies 46-354 (PPKQAAADRR…GRSYNPDLTD (309 aa)). The segment at 179-251 (GDNFRITKAD…FEFDIFTRLF (73 aa)) is EF-hand-like. Residues Asp232, Thr234, Asn236, Tyr238, and Glu243 each coordinate Ca(2+). The SH2-like stretch occupies residues 252–354 (QPWTSILRNW…GRSYNPDLTD (103 aa)). A 4-O-phospho-L-tyrosine-binding site is contributed by Arg297. Residues 355-383 (LCEPTPHDHIKVTQEQYELYCEMGSTFQL) form a linker region. Residues 384 to 423 (CKICAENDKDVKIEPCGHLMCTSCLTSWQESDGQGCPFCR) form an RING-type zinc finger. Disordered stretches follow at residues 480–582 (MNER…RTCR), 709–728 (VRNS…SHPV), and 766–911 (LKQP…PVPR). A compositionally biased stretch (polar residues) spans 483-497 (RQNSPVTSPGSSPLS). Pro residues predominate over residues 554–576 (LPAPPPPLREPPPPPERPPPIPP). Over residues 825-834 (PSQPPPPPPA) the composition is skewed to pro residues. A UBA domain is found at 927–970 (SLAENVDAKIAKLMGEGFPFEEVKRALEIAQNNVDVARSILREF).

Interacts with several SH3 domain-containing proteins and with poly-ubiquitinated proteins.

It is found in the cytoplasm. It catalyses the reaction S-ubiquitinyl-[E2 ubiquitin-conjugating enzyme]-L-cysteine + [acceptor protein]-L-lysine = [E2 ubiquitin-conjugating enzyme]-L-cysteine + N(6)-ubiquitinyl-[acceptor protein]-L-lysine.. The protein operates within protein modification; protein ubiquitination. Its function is as follows. E3 ubiquitin-protein ligase which accepts ubiquitin from specific E2 ubiquitin-conjugating enzymes, and transfers it to substrates, generally promoting their degradation by the proteasome. In Xenopus tropicalis (Western clawed frog), this protein is E3 ubiquitin-protein ligase CBL-B (cblb).